Consider the following 1214-residue polypeptide: Lysine-specific demethylase 3A (1214 aa).

2 positions are modified to phosphoserine: Ser-150 and Ser-209. Over residues Thr-194–Pro-211 the composition is skewed to polar residues. Disordered regions lie at residues Thr-194–Ala-215, Pro-271–Gln-293, and Lys-310–Leu-398. Ser-330 is subject to Phosphoserine. The segment covering Leu-361–Glu-370 has biased composition (polar residues). Residues Thr-371 to Cys-380 show a composition bias toward basic and acidic residues. Residues Cys-381–Pro-391 are compositionally biased toward polar residues. A C6-type zinc finger spans residues Cys-546–Cys-571. Positions Leu-769–Leu-773 match the LXXLL motif motif. The residue at position 779 (Lys-779) is an N6-acetyllysine. Residues Met-944–Arg-1167 enclose the JmjC domain. 3 residues coordinate Fe cation: His-1006, Asp-1008, and His-1135.

It belongs to the JHDM2 histone demethylase family. As to quaternary structure, interacts with VRK1. Fe(2+) is required as a cofactor. As to expression, testis specific. Expressed only in male germ cells.

It is found in the cytoplasm. Its subcellular location is the nucleus. The enzyme catalyses N(6),N(6)-dimethyl-L-lysyl(9)-[histone H3] + 2 2-oxoglutarate + 2 O2 = L-lysyl(9)-[histone H3] + 2 formaldehyde + 2 succinate + 2 CO2. In terms of biological role, histone demethylase that specifically demethylates 'Lys-9' of histone H3, thereby playing a central role in histone code. Preferentially demethylates mono- and dimethylated H3 'Lys-9' residue, with a preference for dimethylated residue, while it has weak or no activity on trimethylated H3 'Lys-9'. Demethylation of Lys residue generates formaldehyde and succinate. Involved in hormone-dependent transcriptional activation, by participating in recruitment to androgen-receptor target genes, resulting in H3 'Lys-9' demethylation and transcriptional activation. Involved in spermatogenesis by regulating expression of target genes such as PRM1 and TNP1 which are required for packaging and condensation of sperm chromatin. Directly regulates expression of PPARA and UCP1 and is involved in obesity resistance. The chain is Lysine-specific demethylase 3A (Kdm3a) from Rattus norvegicus (Rat).